Here is a 449-residue protein sequence, read N- to C-terminus: N-succinylarginine dihydrolase (449 aa).

Substrate-binding positions include 19–28 (GGLSYGNVAS), Asn-110, and 137–138 (HR). The interval 23 to 43 (YGNVASQSNSQQGSNPREAAR) is disordered. Positions 25–37 (NVASQSNSQQGSN) are enriched in polar residues. Glu-174 is a catalytic residue. A substrate-binding site is contributed by Arg-214. The active site involves His-250. Substrate is bound by residues Asp-252 and Asn-365. Cys-371 acts as the Nucleophile in catalysis.

The protein belongs to the succinylarginine dihydrolase family. As to quaternary structure, homodimer.

The enzyme catalyses N(2)-succinyl-L-arginine + 2 H2O + 2 H(+) = N(2)-succinyl-L-ornithine + 2 NH4(+) + CO2. The protein operates within amino-acid degradation; L-arginine degradation via AST pathway; L-glutamate and succinate from L-arginine: step 2/5. Catalyzes the hydrolysis of N(2)-succinylarginine into N(2)-succinylornithine, ammonia and CO(2). This is N-succinylarginine dihydrolase from Pseudomonas entomophila (strain L48).